The chain runs to 164 residues: Transcriptional repressor NrdR (164 aa).

A zinc finger lies at 3-34 (CPKCNYHKSSVVDSRQAEDGNTIRRRRECEQC). The ATP-cone domain occupies 49–139 (LLVIKKDGTR…VYKSFKDVDE (91 aa)).

This sequence belongs to the NrdR family. Requires Zn(2+) as cofactor.

Its function is as follows. Negatively regulates transcription of bacterial ribonucleotide reductase nrd genes and operons by binding to NrdR-boxes. The sequence is that of Transcriptional repressor NrdR from Streptococcus pyogenes serotype M5 (strain Manfredo).